The sequence spans 455 residues: Bifunctional protein GlmU (455 aa).

Residues 1–228 (MYKCALVLAA…YEETIGVNSR (228 aa)) are pyrophosphorylase. UDP-N-acetyl-alpha-D-glucosamine is bound by residues 8 to 11 (LAAG), K22, Q73, and 78 to 79 (GT). Residue D103 coordinates Mg(2+). Residues G140, E154, N169, and N226 each contribute to the UDP-N-acetyl-alpha-D-glucosamine site. Position 226 (N226) interacts with Mg(2+). The interval 229-249 (VQLAEAEEILKNRINLMHMEN) is linker. The tract at residues 250–455 (GVTLIDPRTT…GWVDKKGLKK (206 aa)) is N-acetyltransferase. UDP-N-acetyl-alpha-D-glucosamine-binding residues include R331 and K349. The active-site Proton acceptor is the H361. Residues Y364 and N375 each contribute to the UDP-N-acetyl-alpha-D-glucosamine site. Acetyl-CoA is bound by residues 384-385 (NY), A421, and R438.

This sequence in the N-terminal section; belongs to the N-acetylglucosamine-1-phosphate uridyltransferase family. The protein in the C-terminal section; belongs to the transferase hexapeptide repeat family. Homotrimer. The cofactor is Mg(2+).

It is found in the cytoplasm. It catalyses the reaction alpha-D-glucosamine 1-phosphate + acetyl-CoA = N-acetyl-alpha-D-glucosamine 1-phosphate + CoA + H(+). The enzyme catalyses N-acetyl-alpha-D-glucosamine 1-phosphate + UTP + H(+) = UDP-N-acetyl-alpha-D-glucosamine + diphosphate. The protein operates within nucleotide-sugar biosynthesis; UDP-N-acetyl-alpha-D-glucosamine biosynthesis; N-acetyl-alpha-D-glucosamine 1-phosphate from alpha-D-glucosamine 6-phosphate (route II): step 2/2. Its pathway is nucleotide-sugar biosynthesis; UDP-N-acetyl-alpha-D-glucosamine biosynthesis; UDP-N-acetyl-alpha-D-glucosamine from N-acetyl-alpha-D-glucosamine 1-phosphate: step 1/1. It participates in bacterial outer membrane biogenesis; LPS lipid A biosynthesis. In terms of biological role, catalyzes the last two sequential reactions in the de novo biosynthetic pathway for UDP-N-acetylglucosamine (UDP-GlcNAc). The C-terminal domain catalyzes the transfer of acetyl group from acetyl coenzyme A to glucosamine-1-phosphate (GlcN-1-P) to produce N-acetylglucosamine-1-phosphate (GlcNAc-1-P), which is converted into UDP-GlcNAc by the transfer of uridine 5-monophosphate (from uridine 5-triphosphate), a reaction catalyzed by the N-terminal domain. The chain is Bifunctional protein GlmU from Clostridium beijerinckii (strain ATCC 51743 / NCIMB 8052) (Clostridium acetobutylicum).